We begin with the raw amino-acid sequence, 1159 residues long: EPNMDALIIPVTMEVPCDSRGQRMWWAFLASSMVTFFGGLFIILLWRTLKYLWTVCCHCGDKTKEAQKINNGSSQADGTLKPVDEKEEAVAAEVGWMTSVKDWAGVMISAQTLTGRVLVVLVFALSIGALVIYFIDSSNPIESCQNFYKDFTLQIDMAFNVFFLLYFGLRFIAANDNLWFWLEVNSVVDFFTVPPVFVSVYLNRSWLGLRFLRALRLIQFSEILQFLNILKTSNSIKLVNLLSIFISTWLTAAGFIHLVENSGDPWENFQNSQALTYWECVYLLMVTMSTVGYGDVYAKTTPGGLFIVFFILGGLAMFASYVPEIIEIIGNRKKYGGSYSAVSGRKHIVVCGHITLESVSHFLKDFLHKDRDDVNVEIVFLHNISPNLELEALFKRHFTQVEFYQGSVLNPHDLARVKIESADACLILANKYCDDPDAEDASNIMRVISIKNYHPKIRIITQMLQYHNKAHLLNIPSWNWKEGDDAICLAELRLGFIAQSCLAQGLSTMLANLFSIGSFIKIEEDTWHKYYLEGVSNEMYTEYLSSAFVGLSFPTVCELCFVKLKLLMIAIEYKSANRESRILINPGNHLKIQEGTSGFFIASDAKEVKRAFFYCKACHNDITDPKRIKKCGCKRLEDEQPSTLSPKKKQRNGGMRNSPSSSPKLMRHDPLLIPGNDQIDNMDSNVKKYDSTGMFHWCAPKEIEKVISTRSEAAMTVLSGHVVVCIFGHVSSALIGLRNLVMPLRASNFHYHELKHIVFVGSIEYLKREWETLHNFPKVSILPGTPLTRADLRAVNINLCDMCVILSANQNNIDDTSLQDKECILASLNIKSMQFDDSIGVLQANSQGFTPPGMDKSSPDNSPVHGMLRQPSITTGVNIPIITELVNDTNVQFLDQDDDDDPDTELYLTQPFACGTAFAVSVLDSLMSATYFNDNILTLIRTLVTGGATPELEALIAEENALRGGYSTPQTLANRDRCRVAQLALLDGPFADLGDGGCYGDLFCKALKTYNMLCFGIYRLRDAHLSTPSQCTKRYVITNPPYRFELVPTDLIFCLMQFDHNAGQSRASLSHSSHSSQSSSKKSSSVHSIPSTANRQNRPKSRESRDKQTEKKWFTDEPDNAYPRNIQIEPMSTHMANQINQYKSTSSLIPPIREVEDEC.

The Extracellular segment spans residues 1 to 24; it reads EPNMDALIIPVTMEVPCDSRGQRM. Residues 25 to 45 traverse the membrane as a helical segment; sequence WWAFLASSMVTFFGGLFIILL. Topologically, residues 46–116 are cytoplasmic; the sequence is WRTLKYLWTV…MISAQTLTGR (71 aa). 3 S-palmitoyl cysteine lipidation sites follow: cysteine 56, cysteine 57, and cysteine 59. A helical membrane pass occupies residues 117–137; sequence VLVVLVFALSIGALVIYFIDS. The Extracellular segment spans residues 138-152; that stretch reads SNPIESCQNFYKDFT. The chain crosses the membrane as a helical span at residues 153 to 173; that stretch reads LQIDMAFNVFFLLYFGLRFIA. The Cytoplasmic segment spans residues 174-177; it reads ANDN. Residues 178 to 198 form a helical membrane-spanning segment; that stretch reads LWFWLEVNSVVDFFTVPPVFV. At 199 to 202 the chain is on the extracellular side; it reads SVYL. A helical; Voltage-sensor transmembrane segment spans residues 203–223; that stretch reads NRSWLGLRFLRALRLIQFSEI. At 224-238 the chain is on the cytoplasmic side; that stretch reads LQFLNILKTSNSIKL. Residues 239–259 form a helical membrane-spanning segment; the sequence is VNLLSIFISTWLTAAGFIHLV. At 260–273 the chain is on the extracellular side; sequence ENSGDPWENFQNSQ. Positions 274–296 form an intramembrane region, pore-forming; that stretch reads ALTYWECVYLLMVTMSTVGYGDV. Residues 290–293 carry the Selectivity for potassium motif; that stretch reads TVGY. Residues 297–305 are Extracellular-facing; that stretch reads YAKTTPGGL. The chain crosses the membrane as a helical span at residues 306–326; sequence FIVFFILGGLAMFASYVPEII. At 327 to 1159 the chain is on the cytoplasmic side; sequence EIIGNRKKYG…PPIREVEDEC (833 aa). The region spanning 345–487 is the RCK N-terminal 1 domain; that stretch reads RKHIVVCGHI…WNWKEGDDAI (143 aa). 3 residues coordinate Mg(2+): glutamate 377, glutamine 400, and glutamate 402. Positions 494–514 are segment S7; sequence LGFIAQSCLAQGLSTMLANLF. Positions 551–571 are segment S8; the sequence is LSFPTVCELCFVKLKLLMIAI. The tract at residues 615 to 619 is heme-binding motif; that stretch reads CKACH. Residues 639–668 are disordered; the sequence is EQPSTLSPKKKQRNGGMRNSPSSSPKLMRH. At threonine 643 the chain carries Phosphothreonine. Phosphoserine is present on residues serine 645, serine 658, and serine 662. Residues 717–737 form a segment S9 region; the sequence is VLSGHVVVCIFGHVSSALIGL. An RCK N-terminal 2 domain is found at 719–863; the sequence is SGHVVVCIFG…MDKSSPDNSP (145 aa). Threonine 850 bears the Phosphothreonine mark. Phosphoserine is present on residues serine 858 and serine 862. Residues 883–905 carry the Calcium bowl motif; that stretch reads TELVNDTNVQFLDQDDDDDPDTE. Residues glutamine 892, aspartate 895, aspartate 898, and aspartate 900 each contribute to the Ca(2+) site. Residues 912 to 932 form a segment S10 region; sequence FACGTAFAVSVLDSLMSATYF. Positions 1066-1091 are enriched in low complexity; that stretch reads RASLSHSSHSSQSSSKKSSSVHSIPS. Positions 1066 to 1124 are disordered; that stretch reads RASLSHSSHSSQSSSKKSSSVHSIPSTANRQNRPKSRESRDKQTEKKWFTDEPDNAYPR. The segment covering 1100-1115 has biased composition (basic and acidic residues); it reads KSRESRDKQTEKKWFT. 2 positions are modified to phosphoserine: serine 1101 and serine 1104.

Belongs to the potassium channel family. Calcium-activated (TC 1.A.1.3) subfamily. KCa1.1/KCNMA1 sub-subfamily. Homotetramer; which constitutes the calcium-activated potassium channel. Interacts with beta subunits KCNMB1, KCNMB2, KCNMB3 and KCNMB4. Interacts with gamma subunits LRRC26, LRRC38, LRRC52 and LRRC55. Beta and gamma subunits are accessory, and modulate its activity. Interacts with RAB11B. Post-translationally, phosphorylated. Phosphorylation by kinases such as PKA and/or PKG. In smooth muscles, phosphorylation affects its activity. Palmitoylation by ZDHHC22 and ZDHHC23 within the intracellular linker between the S0 and S1 transmembrane domains regulates localization to the plasma membrane. Depalmitoylated by LYPLA1 and LYPLAL1, leading to retard exit from the trans-Golgi network. In terms of tissue distribution, expressed in all vascular and smooth muscles.

The protein resides in the cell membrane. The catalysed reaction is K(+)(in) = K(+)(out). Its activity is regulated as follows. Ethanol and carbon monoxide-bound heme increase channel activation. Heme inhibits channel activation. In terms of biological role, potassium channel activated by both membrane depolarization or increase in cytosolic Ca(2+) that mediates export of K(+). It is also activated by the concentration of cytosolic Mg(2+). Its activation dampens the excitatory events that elevate the cytosolic Ca(2+) concentration and/or depolarize the cell membrane. It therefore contributes to repolarization of the membrane potential. Plays a key role in controlling excitability in a number of systems, such as regulation of the contraction of smooth muscle, the tuning of hair cells in the cochlea, regulation of transmitter release, and innate immunity. In smooth muscles, its activation by high level of Ca(2+), caused by ryanodine receptors in the sarcoplasmic reticulum, regulates the membrane potential. In cochlea cells, its number and kinetic properties partly determine the characteristic frequency of each hair cell and thereby helps to establish a tonotopic map. Kinetics of KCNMA1 channels are determined by alternative splicing, phosphorylation status and its combination with modulating beta subunits. Highly sensitive to both iberiotoxin (IbTx) and charybdotoxin (CTX). The chain is Calcium-activated potassium channel subunit alpha-1 (KCNMA1) from Canis lupus familiaris (Dog).